The chain runs to 352 residues: NAD(+)-dependent homoserine dehydrogenase (352 aa).

The protein belongs to the homoserine dehydrogenase family.

It carries out the reaction L-homoserine + NAD(+) = L-aspartate 4-semialdehyde + NADH + H(+). Functionally, dehydrogenase involved in the degradation of canavanine, the delta-oxa-analog of arginine, allowing growth on canavanine as sole nitrogen and carbon source. Catalyzes the conversion of homoserine and NAD(+) to aspartate-semialdehyde and NADH. Is highly specific for NAD(+) and cannot use NADP(+). The protein is NAD(+)-dependent homoserine dehydrogenase of Pseudomonas canavaninivorans.